We begin with the raw amino-acid sequence, 104 residues long: Large ribosomal subunit protein bL21 (104 aa).

This sequence belongs to the bacterial ribosomal protein bL21 family. As to quaternary structure, part of the 50S ribosomal subunit. Contacts protein L20.

Its function is as follows. This protein binds to 23S rRNA in the presence of protein L20. This is Large ribosomal subunit protein bL21 from Helicobacter pylori (strain J99 / ATCC 700824) (Campylobacter pylori J99).